Here is a 198-residue protein sequence, read N- to C-terminus: Probable GTP-binding protein EngB (198 aa).

Positions 22–195 (DLPEIALAGR…WKAIHKFTKT (174 aa)) constitute an EngB-type G domain. GTP contacts are provided by residues 30-37 (GRSNVGKS), 57-61 (GKTQT), 75-78 (DVPG), 142-145 (TKAD), and 174-176 (FSS). Mg(2+)-binding residues include serine 37 and threonine 59.

This sequence belongs to the TRAFAC class TrmE-Era-EngA-EngB-Septin-like GTPase superfamily. EngB GTPase family. It depends on Mg(2+) as a cofactor.

Necessary for normal cell division and for the maintenance of normal septation. This Bacillus cytotoxicus (strain DSM 22905 / CIP 110041 / 391-98 / NVH 391-98) protein is Probable GTP-binding protein EngB.